The chain runs to 181 residues: Ribulose bisphosphate carboxylase small subunit, chloroplastic 1 (181 aa).

A chloroplast-targeting transit peptide spans 1-57 (MASSIVSSAAVATRSNVAQASMVAPFTGLKSAASFPVTKKNNNVDITSLASNGGRVR).

It belongs to the RuBisCO small chain family. In terms of assembly, heterohexadecamer of 8 large and 8 small subunits.

The protein resides in the plastid. It localises to the chloroplast. RuBisCO catalyzes two reactions: the carboxylation of D-ribulose 1,5-bisphosphate, the primary event in carbon dioxide fixation, as well as the oxidative fragmentation of the pentose substrate. Both reactions occur simultaneously and in competition at the same active site. Although the small subunit is not catalytic it is essential for maximal activity. In Solanum tuberosum (Potato), this protein is Ribulose bisphosphate carboxylase small subunit, chloroplastic 1.